A 382-amino-acid polypeptide reads, in one-letter code: Intermediate transcription factor 3 large subunit (382 aa).

It belongs to the poxviruses A23 family. In terms of assembly, heterodimer of a 45 kDa and a 32 kDa subunit.

Acts with RNA polymerase to initiate transcription from intermediate gene promoters. In Oryctolagus cuniculus (Rabbit), this protein is Intermediate transcription factor 3 large subunit (VITF3L).